Consider the following 711-residue polypeptide: Tyrosine-protein phosphatase 2 (711 aa).

A Rhodanese domain is found at 21 to 130 (TESVSWIIDL…FASSHPDAIV (110 aa)). Disordered regions lie at residues 275–306 (APQQ…SRVR) and 329–376 (IIPR…RANK). Polar residues-rich tracts occupy residues 290-306 (SYPS…SRVR) and 340-363 (NAQN…SNTR). The 266-residue stretch at 433–698 (EMTRSLAFND…KFLYDVVDYL (266 aa)) folds into the Tyrosine-protein phosphatase domain. Cysteine 630 serves as the catalytic Phosphocysteine intermediate.

This sequence belongs to the protein-tyrosine phosphatase family. Non-receptor class subfamily.

It is found in the cytoplasm. It catalyses the reaction O-phospho-L-tyrosyl-[protein] + H2O = L-tyrosyl-[protein] + phosphate. Its function is as follows. Plays a role in inhibiting the onset of mitosis. Dephosphorylates sty1/spc1 and wis1/spc2/sty2. The polypeptide is Tyrosine-protein phosphatase 2 (pyp2) (Schizosaccharomyces pombe (strain 972 / ATCC 24843) (Fission yeast)).